We begin with the raw amino-acid sequence, 120 residues long: MHETDMTKALIMTIQDWFDQQVEKPQITKIHLLVGQFTCVEPVSLQFAFEVQTKQTFLNGAELVIKDVPLVAYCHTCQTEYSPEIGLQYSCPTCRSPMDDIRSGRELKIDRIEHHQCTPA.

Histidine 2, glutamate 3, and glutamate 41 together coordinate Ni(2+). Zn(2+)-binding residues include cysteine 74, cysteine 77, cysteine 91, and cysteine 94.

Belongs to the HypA/HybF family.

Involved in the maturation of the nickel-dependent guanidine hydrolase GdmH. Required for nickel insertion into the metal center of GdmH. Seems to be required only for GdmH activation and not for activity. In Synechocystis sp. (strain ATCC 27184 / PCC 6803 / Kazusa), this protein is Guanidine hydrolase-activating protein A.